The chain runs to 293 residues: Ribosomal protein L11 methyltransferase (293 aa).

Residues Thr145, Gly166, Asp188, and Asn230 each contribute to the S-adenosyl-L-methionine site.

Belongs to the methyltransferase superfamily. PrmA family.

It localises to the cytoplasm. It catalyses the reaction L-lysyl-[protein] + 3 S-adenosyl-L-methionine = N(6),N(6),N(6)-trimethyl-L-lysyl-[protein] + 3 S-adenosyl-L-homocysteine + 3 H(+). In terms of biological role, methylates ribosomal protein L11. The protein is Ribosomal protein L11 methyltransferase of Shewanella putrefaciens (strain CN-32 / ATCC BAA-453).